The sequence spans 178 residues: Ribosome maturation factor RimM (178 aa).

A PRC barrel domain is found at 95-174; sequence EGQHFWFNVI…IVHVKDAKDI (80 aa).

The protein belongs to the RimM family. As to quaternary structure, binds ribosomal protein uS19.

The protein localises to the cytoplasm. Functionally, an accessory protein needed during the final step in the assembly of 30S ribosomal subunit, possibly for assembly of the head region. Essential for efficient processing of 16S rRNA. May be needed both before and after RbfA during the maturation of 16S rRNA. It has affinity for free ribosomal 30S subunits but not for 70S ribosomes. The sequence is that of Ribosome maturation factor RimM from Sulfurovum sp. (strain NBC37-1).